The sequence spans 255 residues: tRNA (guanine-N(1)-)-methyltransferase (255 aa).

Residues glycine 113 and isoleucine 133–leucine 138 each bind S-adenosyl-L-methionine.

The protein belongs to the RNA methyltransferase TrmD family. As to quaternary structure, homodimer.

The protein resides in the cytoplasm. The catalysed reaction is guanosine(37) in tRNA + S-adenosyl-L-methionine = N(1)-methylguanosine(37) in tRNA + S-adenosyl-L-homocysteine + H(+). In terms of biological role, specifically methylates guanosine-37 in various tRNAs. The sequence is that of tRNA (guanine-N(1)-)-methyltransferase from Salmonella paratyphi A (strain ATCC 9150 / SARB42).